The sequence spans 196 residues: Small ribosomal subunit protein uS4c (196 aa).

The interval 15-36 (LGTLPGLTSKRPRSGSDLKNPL) is disordered. The 62-residue stretch at 89–150 (MRLDNILFRL…KQRSKALIQN (62 aa)) folds into the S4 RNA-binding domain.

The protein belongs to the universal ribosomal protein uS4 family. In terms of assembly, part of the 30S ribosomal subunit. Contacts protein S5. The interaction surface between S4 and S5 is involved in control of translational fidelity.

It is found in the plastid. The protein resides in the chloroplast. Its function is as follows. One of the primary rRNA binding proteins, it binds directly to 16S rRNA where it nucleates assembly of the body of the 30S subunit. With S5 and S12 plays an important role in translational accuracy. This chain is Small ribosomal subunit protein uS4c (rps4), found in Yucca filamentosa (Bear-grass).